The following is a 414-amino-acid chain: Putative competence-damage inducible protein (414 aa).

The protein belongs to the CinA family.

The polypeptide is Putative competence-damage inducible protein (Clostridium novyi (strain NT)).